The following is a 157-amino-acid chain: Ribosome maturation factor RimP (157 aa).

Belongs to the RimP family.

Its subcellular location is the cytoplasm. Required for maturation of 30S ribosomal subunits. The protein is Ribosome maturation factor RimP of Petrotoga mobilis (strain DSM 10674 / SJ95).